The chain runs to 245 residues: tRNA pseudouridine synthase A (245 aa).

Residue aspartate 52 is the Nucleophile of the active site. Tyrosine 111 lines the substrate pocket.

The protein belongs to the tRNA pseudouridine synthase TruA family. In terms of assembly, homodimer.

It catalyses the reaction uridine(38/39/40) in tRNA = pseudouridine(38/39/40) in tRNA. In terms of biological role, formation of pseudouridine at positions 38, 39 and 40 in the anticodon stem and loop of transfer RNAs. The chain is tRNA pseudouridine synthase A from Ehrlichia chaffeensis (strain ATCC CRL-10679 / Arkansas).